The primary structure comprises 461 residues: Interleukin-1 receptor-associated kinase 4 (461 aa).

Met1 bears the N-acetylmethionine mark. Residues 20–104 (RKLSDFIDPQ…APASLLLPDA (85 aa)) form the Death domain. The residue at position 34 (Lys34) is an N6-acetyllysine. The region spanning 187-455 (SVGGNKMGEG…PDIKKVQQLL (269 aa)) is the Protein kinase domain. ATP-binding positions include 193 to 201 (MGEGGFGVV) and Lys214. The active-site Proton acceptor is the Asp312. ATP is bound by residues 314–317 (KSAN) and Asp330. Phosphothreonine occurs at positions 343 and 346. Phosphoserine is present on Ser347.

It belongs to the protein kinase superfamily. TKL Ser/Thr protein kinase family. Pelle subfamily. In terms of assembly, associates with MYD88 and IRAK2 to form a ternary complex called the Myddosome. Once phosphorylated, IRAK4 dissociates from the receptor complex and then associates with the TNF receptor-associated factor 6 (TRAF6), IRAK1, and PELI1; this intermediate complex is required for subsequent NF-kappa-B activation. Direct binding of SMAD6 to PELI1 prevents complex formation and hence negatively regulates IL1R-TLR signaling and eventually NF-kappa-B-mediated gene expression. Interacts with IL1RL1. Interacts (when phosphorylated) with IRAK1. May interact (when phosphorylated) with IRAK3. Mg(2+) is required as a cofactor. In terms of processing, phosphorylated.

The protein localises to the cytoplasm. It carries out the reaction L-seryl-[protein] + ATP = O-phospho-L-seryl-[protein] + ADP + H(+). It catalyses the reaction L-threonyl-[protein] + ATP = O-phospho-L-threonyl-[protein] + ADP + H(+). Serine/threonine-protein kinase that plays a critical role in initiating innate immune response against foreign pathogens. Involved in Toll-like receptor (TLR) and IL-1R signaling pathways. Is rapidly recruited by MYD88 to the receptor-signaling complex upon TLR activation to form the Myddosome together with IRAK2. Phosphorylates initially IRAK1, thus stimulating the kinase activity and intensive autophosphorylation of IRAK1. Phosphorylates E3 ubiquitin ligases Pellino proteins (PELI1, PELI2 and PELI3) to promote pellino-mediated polyubiquitination of IRAK1. Then, the ubiquitin-binding domain of IKBKG/NEMO binds to polyubiquitinated IRAK1 bringing together the IRAK1-MAP3K7/TAK1-TRAF6 complex and the NEMO-IKKA-IKKB complex. In turn, MAP3K7/TAK1 activates IKKs (CHUK/IKKA and IKBKB/IKKB) leading to NF-kappa-B nuclear translocation and activation. Alternatively, phosphorylates TIRAP to promote its ubiquitination and subsequent degradation. Phosphorylates NCF1 and regulates NADPH oxidase activation after LPS stimulation suggesting a similar mechanism during microbial infections. The chain is Interleukin-1 receptor-associated kinase 4 (IRAK4) from Bos taurus (Bovine).